The sequence spans 658 residues: DNA mismatch repair protein MutL (658 aa).

The segment covering 114-130 (RQEDSSHATQVKAEDGK) has biased composition (basic and acidic residues). Disordered stretches follow at residues 114 to 138 (RQED…TAAA) and 353 to 405 (PMPS…HSLS). Positions 361–372 (ENLFDSASNHPT) are enriched in polar residues.

This sequence belongs to the DNA mismatch repair MutL/HexB family.

In terms of biological role, this protein is involved in the repair of mismatches in DNA. It is required for dam-dependent methyl-directed DNA mismatch repair. May act as a 'molecular matchmaker', a protein that promotes the formation of a stable complex between two or more DNA-binding proteins in an ATP-dependent manner without itself being part of a final effector complex. This chain is DNA mismatch repair protein MutL, found in Neisseria gonorrhoeae (strain NCCP11945).